The following is a 460-amino-acid chain: Ammonium transporter Rh type C (460 aa).

Residues 1–9 (MVWNTNLRW) lie on the Cytoplasmic side of the membrane. A helical membrane pass occupies residues 10–30 (RLPVTCLLLQVALVVLFGVFV). Residues 31–61 (RYDMDADPHWIDKKEAENSTSDMENEFYYRY) are Extracellular-facing. N48 carries N-linked (GlcNAc...) asparagine glycosylation. Residues 62–82 (PSFQDVHVMIFVGFGFLMTFL) traverse the membrane as a helical segment. At 83–90 (QRYGYSSV) the chain is on the cytoplasmic side. A helical transmembrane segment spans residues 91–111 (GFNFLLAAFGIQWALLLQGWF). Residues 112-125 (HSYYRGYIRVGVEN) lie on the Extracellular side of the membrane. A helical membrane pass occupies residues 126–145 (LINADFCVGSVCVAFGAVLG). Residues 146–151 (KVSPVQ) lie on the Cytoplasmic side of the membrane. The chain crosses the membrane as a helical span at residues 152–174 (LLIMTLFQVTLFSVNEFILLNLL). The Extracellular portion of the chain corresponds to 175 to 179 (EVKDA). A helical membrane pass occupies residues 180–200 (GGSMTIHTFGAYFGLTVTWIL). The Cytoplasmic portion of the chain corresponds to 201-219 (YRPGLHQSKERQSSVYHSD). The helical transmembrane segment at 220–240 (LFAMIGTLFLWMYWPSFNSAV) threads the bilayer. Residues 241–251 (SNHGDAQHRAA) are Extracellular-facing. A helical transmembrane segment spans residues 252–272 (INTYCSLAACVLTSVALSSAL). The Cytoplasmic portion of the chain corresponds to 273–285 (HKKGKLDMVHIQN). The chain crosses the membrane as a helical span at residues 286 to 306 (ATLAGGVAVGTAAEMMLMPYG). Residue S307 is a topological domain, extracellular. A helical transmembrane segment spans residues 308–328 (LIVGFICGIVSTLGFVYLTPF). Topologically, residues 329–339 (LESRLRVQDTC) are cytoplasmic. Residues 340-360 (GIHNLHGIPGIIGAIVGAVTA) form a helical membrane-spanning segment. Residues 361-396 (SCANTDVYGVNGLTQAFGFDGFKTNRTPSMQGKFQA) are Extracellular-facing. The chain crosses the membrane as a helical span at residues 397-417 (AGLFVSLAMALVGGIIVGIIL). Over 418 to 460 (KLPFWGQPADENCFEDAIYWEMPEEPKSTVLHPEDSTLKPSEP) the chain is Cytoplasmic.

The protein belongs to the ammonium transporter (TC 2.A.49) family. Rh subfamily. Homotrimer. N-glycosylated.

It localises to the apical cell membrane. It carries out the reaction NH4(+)(in) = NH4(+)(out). The enzyme catalyses methylamine(out) = methylamine(in). It catalyses the reaction CO2(out) = CO2(in). Its function is as follows. Ammonium transporter involved in the maintenance of acid-base homeostasis. Transports ammonium and its related derivative methylammonium across the plasma membrane of epithelial cells likely contributing to renal transepithelial ammonia transport and ammonia metabolism. Postulated to primarily mediate an electroneutral bidirectional transport of NH3 ammonia species according to a mechanism that implies interaction of an NH4(+) ion with acidic residues of the pore entry followed by dissociation of NH4(+) into NH3 and H(+). As a result NH3 transits through the central pore and is protonated on the extracellular side reforming NH4(+). May act as a CO2 channel providing for renal acid secretion. The protein is Ammonium transporter Rh type C (RHCG) of Canis lupus familiaris (Dog).